The primary structure comprises 177 residues: MSVLDTIARPYAKAIFELAIENQSIEKWKKTLIFINEIIRSKKIEKFLSGSLSPSYLSSFFIFVAGDHIDKDARNLIKLLAENQRFKIFNNILRQFLKLETSYQGNTIIELISAYSLQEHEIIDIRCILQKIFLSKIKFIYKIDHQILDGIIIKKADTVFDFSVRSYLKQLSDVLNF.

The protein belongs to the ATPase delta chain family. In terms of assembly, F-type ATPases have 2 components, F(1) - the catalytic core - and F(0) - the membrane proton channel. F(1) has five subunits: alpha(3), beta(3), gamma(1), delta(1), epsilon(1). F(0) has three main subunits: a(1), b(2) and c(10-14). The alpha and beta chains form an alternating ring which encloses part of the gamma chain. F(1) is attached to F(0) by a central stalk formed by the gamma and epsilon chains, while a peripheral stalk is formed by the delta and b chains.

Its subcellular location is the cell membrane. F(1)F(0) ATP synthase produces ATP from ADP in the presence of a proton or sodium gradient. F-type ATPases consist of two structural domains, F(1) containing the extramembraneous catalytic core and F(0) containing the membrane proton channel, linked together by a central stalk and a peripheral stalk. During catalysis, ATP synthesis in the catalytic domain of F(1) is coupled via a rotary mechanism of the central stalk subunits to proton translocation. In terms of biological role, this protein is part of the stalk that links CF(0) to CF(1). It either transmits conformational changes from CF(0) to CF(1) or is implicated in proton conduction. The protein is ATP synthase subunit delta of Buchnera aphidicola subsp. Schizaphis graminum (strain Sg).